Reading from the N-terminus, the 357-residue chain is UPF0324 membrane protein BMEI1914 (357 aa).

The next 11 membrane-spanning stretches (helical) occupy residues 29–48 (NILP…MVLE), 58–77 (AWLE…RSLA), 90–112 (SAKL…SAVI), 117–136 (GLIF…SYGI), 149–171 (LVAC…VIGA), 181–203 (AFTA…LLGL), 210–232 (ILAG…VSLL), 242–261 (LVRV…ISGN), 268–290 (PGFF…LHSL), 300–322 (AIQY…GVDI), and 334–356 (LTAI…MLGV).

It belongs to the UPF0324 family.

The protein localises to the cell membrane. In Brucella melitensis biotype 1 (strain ATCC 23456 / CCUG 17765 / NCTC 10094 / 16M), this protein is UPF0324 membrane protein BMEI1914.